A 396-amino-acid chain; its full sequence is Methylthioribose kinase (396 aa).

Residues N44, K61, and 115–117 contribute to the ATP site; that span reads EDL. Substrate is bound at residue D233. Residue 250-252 participates in ATP binding; sequence DPE. Residue R340 participates in substrate binding.

This sequence belongs to the methylthioribose kinase family. In terms of assembly, homodimer.

The enzyme catalyses 5-(methylsulfanyl)-D-ribose + ATP = 5-(methylsulfanyl)-alpha-D-ribose 1-phosphate + ADP + H(+). Its pathway is amino-acid biosynthesis; L-methionine biosynthesis via salvage pathway; S-methyl-5-thio-alpha-D-ribose 1-phosphate from S-methyl-5'-thioadenosine (hydrolase route): step 2/2. In terms of biological role, catalyzes the phosphorylation of methylthioribose into methylthioribose-1-phosphate. This chain is Methylthioribose kinase, found in Geobacillus thermodenitrificans (strain NG80-2).